Reading from the N-terminus, the 151-residue chain is UPF0208 membrane protein YfbV (151 aa).

Helical transmembrane passes span 46–65 (FGIR…QIAL) and 69–91 (LGPA…WWLG).

Belongs to the UPF0208 family.

It is found in the cell inner membrane. In Photorhabdus temperata, this protein is UPF0208 membrane protein YfbV (yfbV).